The primary structure comprises 104 residues: Complex III assembly factor LYRM7 (104 aa).

Residue Ser60 is modified to Phosphoserine.

It belongs to the complex I LYR family. As to quaternary structure, interacts with UQCRFS1.

Its subcellular location is the mitochondrion matrix. Assembly factor required for Rieske Fe-S protein UQCRFS1 incorporation into the cytochrome b-c1 (CIII) complex. Functions as a chaperone, binding to this subunit within the mitochondrial matrix and stabilizing it prior to its translocation and insertion into the late CIII dimeric intermediate within the mitochondrial inner membrane. The protein is Complex III assembly factor LYRM7 (Lyrm7) of Mus musculus (Mouse).